The primary structure comprises 113 residues: Large ribosomal subunit protein uL22 (113 aa).

Belongs to the universal ribosomal protein uL22 family. Part of the 50S ribosomal subunit.

Functionally, this protein binds specifically to 23S rRNA; its binding is stimulated by other ribosomal proteins, e.g. L4, L17, and L20. It is important during the early stages of 50S assembly. It makes multiple contacts with different domains of the 23S rRNA in the assembled 50S subunit and ribosome. The globular domain of the protein is located near the polypeptide exit tunnel on the outside of the subunit, while an extended beta-hairpin is found that lines the wall of the exit tunnel in the center of the 70S ribosome. This is Large ribosomal subunit protein uL22 from Solibacter usitatus (strain Ellin6076).